A 443-amino-acid chain; its full sequence is Tubulin beta chain (443 aa).

GTP contacts are provided by Q11, E69, S138, G142, T143, G144, N204, and N226. E69 serves as a coordination point for Mg(2+). A disordered region spans residues Q424–N443. The span at T429–N443 shows a compositional bias: acidic residues.

The protein belongs to the tubulin family. As to quaternary structure, dimer of alpha and beta chains. A typical microtubule is a hollow water-filled tube with an outer diameter of 25 nm and an inner diameter of 15 nM. Alpha-beta heterodimers associate head-to-tail to form protofilaments running lengthwise along the microtubule wall with the beta-tubulin subunit facing the microtubule plus end conferring a structural polarity. Microtubules usually have 13 protofilaments but different protofilament numbers can be found in some organisms and specialized cells. Mg(2+) serves as cofactor. Some glutamate residues at the C-terminus are either polyglutamylated or polyglycylated. These 2 modifications occur exclusively on glutamate residues and result in either polyglutamate or polyglycine chains on the gamma-carboxyl group. Both modifications can coexist on the same protein on adjacent residues, and lowering polyglycylation levels increases polyglutamylation, and reciprocally. The precise function of such modifications is still unclear but they regulate the assembly and dynamics of axonemal microtubules.

Its subcellular location is the cytoplasm. The protein localises to the cytoskeleton. Functionally, tubulin is the major constituent of microtubules, a cylinder consisting of laterally associated linear protofilaments composed of alpha- and beta-tubulin heterodimers. Microtubules grow by the addition of GTP-tubulin dimers to the microtubule end, where a stabilizing cap forms. Below the cap, tubulin dimers are in GDP-bound state, owing to GTPase activity of alpha-tubulin. The protein is Tubulin beta chain (BTU1) of Tetrahymena thermophila.